Consider the following 877-residue polypeptide: Alanine--tRNA ligase (877 aa).

Zn(2+)-binding residues include H565, H569, C667, and H671.

Belongs to the class-II aminoacyl-tRNA synthetase family. Zn(2+) serves as cofactor.

It is found in the cytoplasm. The enzyme catalyses tRNA(Ala) + L-alanine + ATP = L-alanyl-tRNA(Ala) + AMP + diphosphate. Its function is as follows. Catalyzes the attachment of alanine to tRNA(Ala) in a two-step reaction: alanine is first activated by ATP to form Ala-AMP and then transferred to the acceptor end of tRNA(Ala). Also edits incorrectly charged Ser-tRNA(Ala) and Gly-tRNA(Ala) via its editing domain. The protein is Alanine--tRNA ligase of Acidithiobacillus ferridurans.